The sequence spans 379 residues: L-lactate dehydrogenase (379 aa).

An FMN hydroxy acid dehydrogenase domain is found at 1-379; that stretch reads MIISASTDYR…LSRDSLVKIP (379 aa). Position 24 (tyrosine 24) interacts with substrate. The FMN site is built by serine 106 and glutamine 127. Tyrosine 129 is a substrate binding site. Threonine 155 is a binding site for FMN. Arginine 164 provides a ligand contact to substrate. Residue lysine 251 coordinates FMN. Histidine 275 acts as the Proton acceptor in catalysis. Arginine 278 is a binding site for substrate. Residue 306–330 participates in FMN binding; that stretch reads DSGIRTGLDVVRMLALGADCTLLGR.

The protein belongs to the FMN-dependent alpha-hydroxy acid dehydrogenase family. Requires FMN as cofactor.

The protein localises to the cell inner membrane. It catalyses the reaction (S)-lactate + A = pyruvate + AH2. Catalyzes the conversion of L-lactate to pyruvate. Is coupled to the respiratory chain. This Vibrio parahaemolyticus serotype O3:K6 (strain RIMD 2210633) protein is L-lactate dehydrogenase.